Consider the following 252-residue polypeptide: Carboxy-S-adenosyl-L-methionine synthase (252 aa).

Residues tyrosine 45, 70 to 72 (GCS), 95 to 96 (DN), 123 to 124 (DI), asparagine 138, and arginine 205 each bind S-adenosyl-L-methionine.

The protein belongs to the class I-like SAM-binding methyltransferase superfamily. Cx-SAM synthase family. In terms of assembly, homodimer.

The catalysed reaction is prephenate + S-adenosyl-L-methionine = carboxy-S-adenosyl-L-methionine + 3-phenylpyruvate + H2O. Catalyzes the conversion of S-adenosyl-L-methionine (SAM) to carboxy-S-adenosyl-L-methionine (Cx-SAM). The sequence is that of Carboxy-S-adenosyl-L-methionine synthase from Photorhabdus laumondii subsp. laumondii (strain DSM 15139 / CIP 105565 / TT01) (Photorhabdus luminescens subsp. laumondii).